A 126-amino-acid chain; its full sequence is Glycine cleavage system H protein (126 aa).

The 83-residue stretch at 21–103 folds into the Lipoyl-binding domain; the sequence is TVTIGISEHA…YEGGWIVKVK (83 aa). Lysine 62 is modified (N6-lipoyllysine).

This sequence belongs to the GcvH family. In terms of assembly, the glycine cleavage system is composed of four proteins: P, T, L and H. The cofactor is (R)-lipoate.

Functionally, the glycine cleavage system catalyzes the degradation of glycine. The H protein shuttles the methylamine group of glycine from the P protein to the T protein. This chain is Glycine cleavage system H protein, found in Vibrio atlanticus (strain LGP32) (Vibrio splendidus (strain Mel32)).